The primary structure comprises 20 residues: Poneritoxin (20 aa).

Position 18 is a methionine sulfoxide; in form U1-PONTX-Dq3c (M18). Position 19 is a lysine amide; in form U1-PONTX-Dq3a and U1-PONTX-Dq3c (K19).

In terms of processing, the peptide spanning residues 2 to 19 occurs in 3 forms and has been given 3 different names. U1-PONTX-Dq3a has an amidated Lys-19, U1-PONTX-Dq3c has an amidated Lys-19 and an oxidized Met-18, and U1-PONTX-Dq3b has no modifications at either Met-18 or Lys-19. In terms of tissue distribution, expressed by the venom gland.

It is found in the secreted. Its function is as follows. May have antimicrobial properties, like most ant linear peptides. The protein is Poneritoxin of Dinoponera quadriceps (South American ant).